The primary structure comprises 995 residues: Integrator complex subunit 8 (995 aa).

Phosphothreonine is present on Thr-18. Positions 24-29 match the WFEF motif motif; that stretch reads WFEFLL. 4 TPR repeats span residues 250–288, 320–356, 570–603, and 833–866; these read CQVCYDLGAAYFQQGSTNSAVYENAREKFFRTKELIAEI, SQQLTPYSQVHICLRSGNYQEVIQIFIEDNLTLSLPV, VYILMAKGLHCSTVKDFSHAKQLFAACLELVTEF, and HSWLIIQADIYFATNQYSAALHYYLQAGAVCSDF.

It belongs to the Integrator subunit 8 family. As to quaternary structure, component of the Integrator complex, composed of core subunits INTS1, INTS2, INTS3, INTS4, INTS5, INTS6, INTS7, INTS8, INTS9/RC74, INTS10, INTS11/CPSF3L, INTS12, INTS13, INTS14 and INTS15. The core complex associates with protein phosphatase 2A subunits PPP2CA and PPP2R1A, to form the Integrator-PP2A (INTAC) complex.

Its subcellular location is the nucleus. It localises to the chromosome. Component of the integrator complex, a multiprotein complex that terminates RNA polymerase II (Pol II) transcription in the promoter-proximal region of genes. The integrator complex provides a quality checkpoint during transcription elongation by driving premature transcription termination of transcripts that are unfavorably configured for transcriptional elongation: the complex terminates transcription by (1) catalyzing dephosphorylation of the C-terminal domain (CTD) of Pol II subunit POLR2A/RPB1 and SUPT5H/SPT5, (2) degrading the exiting nascent RNA transcript via endonuclease activity and (3) promoting the release of Pol II from bound DNA. The integrator complex is also involved in terminating the synthesis of non-coding Pol II transcripts, such as enhancer RNAs (eRNAs), small nuclear RNAs (snRNAs), telomerase RNAs and long non-coding RNAs (lncRNAs). Within the integrator complex, INTS8 is required for the recruitment of protein phosphatase 2A (PP2A) to transcription pause-release checkpoint. This chain is Integrator complex subunit 8, found in Homo sapiens (Human).